The sequence spans 134 residues: Protein Turandot E (134 aa).

Residues 1–38 (MSYTRTIHSSASILKMNSALQISCLLVVLGCLLGSGHC) form the signal peptide.

The protein belongs to the Turandot family.

Its subcellular location is the secreted. A humoral factor that may play a role in stress tolerance. This chain is Protein Turandot E, found in Drosophila sechellia (Fruit fly).